The chain runs to 262 residues: Taurine import ATP-binding protein TauB (262 aa).

The 231-residue stretch at 4–234 (VDHASVFFAA…RFAETGDARS (231 aa)) folds into the ABC transporter domain. Position 39–46 (39–46 (GASGCGKS)) interacts with ATP.

This sequence belongs to the ABC transporter superfamily. Taurine importer (TC 3.A.1.17.1) family. In terms of assembly, the complex is composed of two ATP-binding proteins (TauB), two transmembrane proteins (TauC) and a solute-binding protein (TauA).

The protein localises to the cell inner membrane. It carries out the reaction taurine(out) + ATP + H2O = taurine(in) + ADP + phosphate + H(+). Functionally, part of the ABC transporter complex TauABC involved in taurine import. Responsible for energy coupling to the transport system. The polypeptide is Taurine import ATP-binding protein TauB (Rhizobium johnstonii (strain DSM 114642 / LMG 32736 / 3841) (Rhizobium leguminosarum bv. viciae)).